We begin with the raw amino-acid sequence, 577 residues long: Nuclear fusion protein tht1 (577 aa).

The N-terminal stretch at 1 to 29 (MKFHPTRPFGLYFEFFIIISFFFTSESTG) is a signal peptide. The Lumenal segment spans residues 30–404 (DVESFMKYSN…MNVYFKGLSN (375 aa)). Asparagine 163 and asparagine 372 each carry an N-linked (GlcNAc...) asparagine glycan. A helical transmembrane segment spans residues 405 to 425 (IISSFAFIGFTLFATLSSLFF). Residues 426 to 433 (KVLKIHRR) are Cytoplasmic-facing. Residues 434–454 (PIIVFGSLSIIFIHIYCFKIT) traverse the membrane as a helical segment. The Lumenal portion of the chain corresponds to 455-470 (SWVNLYGWITCTIART). A helical transmembrane segment spans residues 471–491 (LSFIKLNIRTFYLTAFLCALL). The Cytoplasmic portion of the chain corresponds to 492-577 (NFLRYLKYRN…ESLEQSPWWD (86 aa)).

It belongs to the KAR5 family. N-glycosylated.

The protein resides in the endoplasmic reticulum membrane. It localises to the nucleus membrane. Required for nuclear membrane fusion during karyogamy. The polypeptide is Nuclear fusion protein tht1 (tht1) (Schizosaccharomyces pombe (strain 972 / ATCC 24843) (Fission yeast)).